The sequence spans 238 residues: ATP synthase subunit a (238 aa).

5 helical membrane passes run 18–38 (LTLL…VFWA), 76–96 (YSLL…LGLF), 114–134 (NLAF…IEGI), 166–186 (SLAI…GLIV), and 193–213 (LYWW…SIFI).

This sequence belongs to the ATPase A chain family. As to quaternary structure, F-type ATPases have 2 components, CF(1) - the catalytic core - and CF(0) - the membrane proton channel. CF(1) has five subunits: alpha(3), beta(3), gamma(1), delta(1), epsilon(1). CF(0) has three main subunits: a(1), b(2) and c(9-12). The alpha and beta chains form an alternating ring which encloses part of the gamma chain. CF(1) is attached to CF(0) by a central stalk formed by the gamma and epsilon chains, while a peripheral stalk is formed by the delta and b chains.

The protein localises to the cell membrane. Its function is as follows. Key component of the proton channel; it plays a direct role in the translocation of protons across the membrane. This Streptococcus equi subsp. zooepidemicus (strain H70) protein is ATP synthase subunit a.